A 73-amino-acid chain; its full sequence is Translation initiation factor IF-1 (73 aa).

The S1-like domain occupies 1 to 72; it reads MSKKDVIELE…SRGRIVYRKK (72 aa).

Belongs to the IF-1 family. Component of the 30S ribosomal translation pre-initiation complex which assembles on the 30S ribosome in the order IF-2 and IF-3, IF-1 and N-formylmethionyl-tRNA(fMet); mRNA recruitment can occur at any time during PIC assembly.

It is found in the cytoplasm. Functionally, one of the essential components for the initiation of protein synthesis. Stabilizes the binding of IF-2 and IF-3 on the 30S subunit to which N-formylmethionyl-tRNA(fMet) subsequently binds. Helps modulate mRNA selection, yielding the 30S pre-initiation complex (PIC). Upon addition of the 50S ribosomal subunit IF-1, IF-2 and IF-3 are released leaving the mature 70S translation initiation complex. The polypeptide is Translation initiation factor IF-1 (Fusobacterium nucleatum subsp. nucleatum (strain ATCC 25586 / DSM 15643 / BCRC 10681 / CIP 101130 / JCM 8532 / KCTC 2640 / LMG 13131 / VPI 4355)).